The chain runs to 187 residues: Prepilin peptidase-dependent protein B (187 aa).

Positions 1 to 7 are cleaved as a propeptide — leader sequence; that stretch reads MPVKEQG. Residue F8 is modified to N-methylphenylalanine. Residues 8–28 form a helical membrane-spanning segment; that stretch reads FSLLEVLIAMAISSVLLLGAA.

It localises to the membrane. Its function is as follows. Not yet known. This chain is Prepilin peptidase-dependent protein B (ppdB), found in Escherichia coli (strain K12).